The following is a 334-amino-acid chain: Geminin coiled-coil domain-containing protein 1 (334 aa).

Residues 82–119 are a coiled coil; sequence SQLYRNKQLQDTLVQKEEELARLHEENNHLRQYLNSAL. The disordered stretch occupies residues 143–167; sequence FRKGKRKSKEQRYSPAEIPHPKNAK.

The protein belongs to the GEMC1 family. Post-translationally, highly phosphorylated by CDK2; stimulates initiation of DNA replication.

It localises to the nucleus. Functionally, regulator of DNA replication. Promotes initiation of chromosomal DNA replication by mediating TOPBP1- and CDK2-dependent recruitment of CDC45L onto replication origins. This is Geminin coiled-coil domain-containing protein 1 (GMNC) from Homo sapiens (Human).